Here is a 92-residue protein sequence, read N- to C-terminus: Small ribosomal subunit protein bS20 (92 aa).

The disordered stretch occupies residues 1–23 (MANTPSAKKRAKQAEKRRSHNAS). The span at 7-20 (AKKRAKQAEKRRSH) shows a compositional bias: basic residues.

It belongs to the bacterial ribosomal protein bS20 family.

In terms of biological role, binds directly to 16S ribosomal RNA. The protein is Small ribosomal subunit protein bS20 of Pseudomonas savastanoi pv. phaseolicola (strain 1448A / Race 6) (Pseudomonas syringae pv. phaseolicola (strain 1448A / Race 6)).